A 607-amino-acid chain; its full sequence is Guanine nucleotide-binding protein-like 1 (607 aa).

Residues 1-14 show a composition bias toward basic residues; that stretch reads MPRKKPFSVKQKKK. The disordered stretch occupies residues 1 to 81; that stretch reads MPRKKPFSVK…GPRGYDPNRY (81 aa). Over residues 15-26 the composition is skewed to basic and acidic residues; the sequence is QLQDKRERKRGL. Phosphoserine is present on residues Ser-32, Ser-33, and Ser-34. Phosphothreonine occurs at positions 48 and 50. A phosphoserine mark is found at Ser-51 and Ser-68. Residues 178 to 418 form the CP-type G domain; the sequence is WRQLWRVLEM…LCDCPGLIFP (241 aa). 225–228 contributes to the GTP binding site; sequence NKVD. Ser-324 carries the post-translational modification Phosphoserine. GTP-binding positions include 367 to 374 and 411 to 415; these read GFPNVGKS and DCPGL. The interval 544 to 607 is disordered; the sequence is GRVGPAGDEE…PYALLGEDEC (64 aa). Residues 550 to 585 are compositionally biased toward acidic residues; that stretch reads GDEEEEEEEELSSSCEEEGEEDRDADEEGEGDEDTP. Phosphoserine occurs at positions 561, 562, and 563.

It belongs to the TRAFAC class YlqF/YawG GTPase family.

Functionally, possible regulatory or functional link with the histocompatibility cluster. This chain is Guanine nucleotide-binding protein-like 1 (Gnl1), found in Mus musculus (Mouse).